Reading from the N-terminus, the 198-residue chain is Putative mycofactocin biosynthesis transcriptional regulator MftR (198 aa).

Residues 12–72 (STTPHHISDV…GDFSTHLAQL (61 aa)) form the HTH tetR-type domain. A DNA-binding region (H-T-H motif) is located at residues 35–54 (SVDDIARAAGIARRTLFRYY).

In terms of biological role, may regulate a gene cluster involved in mycofactocin expression. Mycofactocin is a conserved polypeptide that might serve as an electron carrier. In Mycobacterium tuberculosis (strain ATCC 25618 / H37Rv), this protein is Putative mycofactocin biosynthesis transcriptional regulator MftR (mftR).